Reading from the N-terminus, the 658-residue chain is Endoplasmic reticulum chaperone BiP (658 aa).

The first 19 residues, 1–19, serve as a signal peptide directing secretion; it reads MVTMKLFALVLLVSASVFA. ATP contacts are provided by residues 38–41, lysine 98, 228–230, 294–301, and 365–368; these read GTTY, GGT, EKAKRALS, and GSTR. Residues 127–281 are nucleotide-binding (NBD); sequence KPYIEVDIGD…KKKTGKDVRA (155 aa). Positions 410–420 are interdomain linker; that stretch reads QDTGDLVLLDV. The segment at 421-501 is substrate-binding (SBD); the sequence is CPLTLGIETV…PRGVPQIEVT (81 aa). Residues 634–658 are disordered; the sequence is KLYGGAGAPPPEGAEGAEETEKDEL. The segment covering 648 to 658 has biased composition (acidic residues); that stretch reads EGAEETEKDEL. Residues 655–658 carry the Prevents secretion from ER motif; the sequence is KDEL.

This sequence belongs to the heat shock protein 70 family. As to quaternary structure, monomer and homooligomer; homooligomerization via the interdomain linker inactivates the chaperone activity and acts as a storage of hspa5/BiP molecules. Interacts with DNAJC10. Interacts with dnajb9/ERdj4; leading to recruit hspa5/BiP to ern1/ire1. Interacts with ern1/ire1; interaction takes place following interaction with dnajb9/ERdj4 and leads to inactivate ern1/IRE1.

The protein localises to the endoplasmic reticulum lumen. The catalysed reaction is ATP + H2O = ADP + phosphate + H(+). With respect to regulation, the chaperone activity is regulated by ATP-induced allosteric coupling of the nucleotide-binding (NBD) and substrate-binding (SBD) domains. In the ADP-bound and nucleotide-free (apo) states, the two domains have little interaction. In contrast, in the ATP-bound state the two domains are tightly coupled, which results in drastically accelerated kinetics in both binding and release of polypeptide substrates. J domain-containing co-chaperones (dnajb9/ERdj4 or dnajc10/ERdj5) stimulate the ATPase activity and are required for efficient substrate recognition by hspa5/BiP. Homooligomerization inactivates participating hspa5/BiP protomers and probably act as reservoirs to store hspa5/BiP molecules when they are not needed by the cell. Its function is as follows. Endoplasmic reticulum chaperone that plays a key role in protein folding and quality control in the endoplasmic reticulum lumen. Involved in the correct folding of proteins and degradation of misfolded proteins via its interaction with dnajc10/ERdj5, probably to facilitate the release of dnajc10/ERdj5 from its substrate. Acts as a key repressor of the EIF2AK3/PERK and ERN1/IRE1-mediated unfolded protein response (UPR). In the unstressed endoplasmic reticulum, recruited by DNAJB9/ERdj4 to the luminal region of ERN1/IRE1, leading to disrupt the dimerization of ERN1/IRE1, thereby inactivating ERN1/IRE1. Also binds and inactivates EIF2AK3/PERK in unstressed cells. Accumulation of misfolded protein in the endoplasmic reticulum causes release of HSPA5/BiP from ERN1/IRE1 and EIF2AK3/PERK, allowing their homodimerization and subsequent activation. The chain is Endoplasmic reticulum chaperone BiP from Xenopus laevis (African clawed frog).